Reading from the N-terminus, the 1405-residue chain is DNA-directed RNA polymerase subunit beta' (1405 aa).

Zn(2+)-binding residues include Cys70, Cys72, Cys85, and Cys88. Residues Asp460, Asp462, and Asp464 each contribute to the Mg(2+) site. The Zn(2+) site is built by Cys815, Cys890, Cys897, and Cys900. The disordered stretch occupies residues 1375–1405 (GLTDSEMETLSGKPAGAEPVAALADAGADEE).

The protein belongs to the RNA polymerase beta' chain family. As to quaternary structure, the RNAP catalytic core consists of 2 alpha, 1 beta, 1 beta' and 1 omega subunit. When a sigma factor is associated with the core the holoenzyme is formed, which can initiate transcription. It depends on Mg(2+) as a cofactor. Requires Zn(2+) as cofactor.

It catalyses the reaction RNA(n) + a ribonucleoside 5'-triphosphate = RNA(n+1) + diphosphate. In terms of biological role, DNA-dependent RNA polymerase catalyzes the transcription of DNA into RNA using the four ribonucleoside triphosphates as substrates. The polypeptide is DNA-directed RNA polymerase subunit beta' (Xanthomonas oryzae pv. oryzae (strain MAFF 311018)).